A 130-amino-acid polypeptide reads, in one-letter code: ER membrane protein complex subunit 5 (130 aa).

Topologically, residues 1 to 3 are cytoplasmic; that stretch reads MAS. The chain crosses the membrane as a helical span at residues 4 to 22; it reads SFWKGVVGIGLFALAHAAF. Over 23–43 the chain is Lumenal; sequence SAAQHRSYMRLTEKENETLPI. The helical transmembrane segment at 44–63 threads the bilayer; the sequence is DIVLQTLLSFVITCYGIVHI. Residues 64–130 lie on the Cytoplasmic side of the membrane; that stretch reads SGEFKDMDAS…LRLRKLENFH (67 aa).

It belongs to the membrane magnesium transporter (TC 1.A.67) family. Component of the ER membrane protein complex (EMC).

It localises to the endoplasmic reticulum membrane. The protein localises to the golgi apparatus membrane. It is found in the early endosome membrane. Part of the endoplasmic reticulum membrane protein complex (EMC) that enables the energy-independent insertion into endoplasmic reticulum membranes of newly synthesized membrane proteins. Preferentially accommodates proteins with transmembrane domains that are weakly hydrophobic or contain destabilizing features such as charged and aromatic residues. Involved in the cotranslational insertion of multi-pass membrane proteins in which stop-transfer membrane-anchor sequences become ER membrane spanning helices. It is also required for the post-translational insertion of tail-anchored/TA proteins in endoplasmic reticulum membranes. By mediating the proper cotranslational insertion of N-terminal transmembrane domains in an N-exo topology, with translocated N-terminus in the lumen of the ER, controls the topology of multi-pass membrane proteins like the G protein-coupled receptors. By regulating the insertion of various proteins in membranes, it is indirectly involved in many cellular processes. May be involved in Mg(2+) transport. This chain is ER membrane protein complex subunit 5, found in Danio rerio (Zebrafish).